The chain runs to 255 residues: Glutamate racemase (255 aa).

Substrate is bound by residues 7–8 (DS) and 39–40 (YG). C70 (proton donor/acceptor) is an active-site residue. Residue 71–72 (NT) coordinates substrate. C181 functions as the Proton donor/acceptor in the catalytic mechanism. Substrate is bound at residue 182-183 (TH).

This sequence belongs to the aspartate/glutamate racemases family. Homodimer.

It carries out the reaction L-glutamate = D-glutamate. Its pathway is cell wall biogenesis; peptidoglycan biosynthesis. Its function is as follows. Provides the (R)-glutamate required for cell wall biosynthesis. The polypeptide is Glutamate racemase (Helicobacter pylori (strain J99 / ATCC 700824) (Campylobacter pylori J99)).